We begin with the raw amino-acid sequence, 375 residues long: Probable UDP-N-acetylglucosamine 2-epimerase (375 aa).

Belongs to the UDP-N-acetylglucosamine 2-epimerase family.

Its subcellular location is the cytoplasm. The enzyme catalyses UDP-N-acetyl-alpha-D-glucosamine = UDP-N-acetyl-alpha-D-mannosamine. Its pathway is glycan metabolism; exopolysaccharide EPS I biosynthesis. Functionally, may be involved in synthesis of N-acetyltrideoxygalactose, a component of exopolysaccharide EPS I which functions as a virulence factor. This chain is Probable UDP-N-acetylglucosamine 2-epimerase (epsC), found in Ralstonia nicotianae (strain ATCC BAA-1114 / GMI1000) (Ralstonia solanacearum).